We begin with the raw amino-acid sequence, 262 residues long: tRNA pseudouridine synthase A (262 aa).

D52 acts as the Nucleophile in catalysis. Y103 provides a ligand contact to substrate.

Belongs to the tRNA pseudouridine synthase TruA family.

The enzyme catalyses uridine(38/39/40) in tRNA = pseudouridine(38/39/40) in tRNA. Its function is as follows. Formation of pseudouridine at positions 38, 39 and 40 in the anticodon stem and loop of transfer RNAs. The sequence is that of tRNA pseudouridine synthase A from Methanococcus maripaludis (strain DSM 14266 / JCM 13030 / NBRC 101832 / S2 / LL).